We begin with the raw amino-acid sequence, 115 residues long: NAD(P)H-quinone oxidoreductase subunit M (115 aa).

Belongs to the complex I NdhM subunit family. In terms of assembly, NDH-1 can be composed of about 15 different subunits; different subcomplexes with different compositions have been identified which probably have different functions.

It localises to the cellular thylakoid membrane. It carries out the reaction a plastoquinone + NADH + (n+1) H(+)(in) = a plastoquinol + NAD(+) + n H(+)(out). The catalysed reaction is a plastoquinone + NADPH + (n+1) H(+)(in) = a plastoquinol + NADP(+) + n H(+)(out). Functionally, NDH-1 shuttles electrons from an unknown electron donor, via FMN and iron-sulfur (Fe-S) centers, to quinones in the respiratory and/or the photosynthetic chain. The immediate electron acceptor for the enzyme in this species is believed to be plastoquinone. Couples the redox reaction to proton translocation, and thus conserves the redox energy in a proton gradient. Cyanobacterial NDH-1 also plays a role in inorganic carbon-concentration. The chain is NAD(P)H-quinone oxidoreductase subunit M from Prochlorococcus marinus (strain MIT 9215).